We begin with the raw amino-acid sequence, 341 residues long: Bis(monoacylglycero)phosphate synthase CLN5 (341 aa).

The Cytoplasmic segment spans residues 1 to 13; that stretch reads MLRGGPCGAHWRP. A helical; Signal-anchor for type II membrane protein membrane pass occupies residues 14-30; it reads ALALALLGLATILGASP. Over 31–341 the chain is Lumenal; it reads TSGQRWPVPY…PTRHTTFTDL (311 aa). 2 disulfides stabilise this stretch: cysteine 53–cysteine 142 and cysteine 60–cysteine 148. Catalysis depends on histidine 100, which acts as the Proton acceptor. Asparagine 113, asparagine 126, asparagine 161, and asparagine 186 each carry an N-linked (GlcNAc...) asparagine glycan. The active-site Nucleophile; Acyl-thioester intermediate is cysteine 214. N-linked (GlcNAc...) asparagine glycans are attached at residues asparagine 238, asparagine 254, and asparagine 264. The segment at 287 to 326 is membrane-anchoring; the sequence is FLMNFLKIFDTVIIHRQFYLFYNFEYWFLPMKPPFVKITY.

The protein belongs to the CLN5 family. As to quaternary structure, multimer. Interacts with PPT1, TPP1, CLN3, CLN6, CLN8, ATP5F1A and ATP5F1B. Interacts with SORT1, RAB5A and RAB7A. Post-translationally, N-glycosylated with both high mannose and complex type sugars. Glycosylation is important for proper folding and trafficking to the lysosomes. The type II membrane signal anchor is proteolytically cleaved to produce a mature form that is transported to the lysosomes (Bis(monoacylglycero)phosphate synthase CLN5, secreted form). In terms of processing, can undergo proteolytic cleavage at the C-terminus, probably by a cysteine protease and may involve the removal of approximately 10-15 residues from the C-terminal end. In terms of tissue distribution, heart, kidney, liver, spleen, muscle and rectum (at protein level).

The protein localises to the lysosome. It localises to the membrane. The catalysed reaction is S-hexadecanoyl-L-cysteinyl-[protein] + H2O = L-cysteinyl-[protein] + hexadecanoate + H(+). It carries out the reaction 2 1-acyl-sn-glycero-3-phospho-(1'-sn-glycerol) = 1-acyl-sn-glycero-3-phospho-(3'-acyl-sn-1'-glycerol) + sn-glycero-3-phospho-(1'-sn-glycerol). It catalyses the reaction 2 1-(9Z-octadecenoyl)-sn-glycero-3-phospho-(1'-sn-glycerol) = 1-(9Z-octadecenoyl)-sn-glycero-3-phospho-(3'-(9Z-octadecenoyl)-1'-sn-glycerol) + sn-glycero-3-phospho-(1'-sn-glycerol). The enzyme catalyses 2 1-octadecanoyl-sn-glycero-3-phospho-(1'-sn-glycerol) = 1-octadecanoyl-sn-glycero-3-phospho-(3'-octadecanoyl-1'-sn-glycerol) + sn-glycero-3-phospho-(1'-sn-glycerol). The catalysed reaction is 2 1-hexadecanoyl-sn-glycero-3-phospho-(1'-sn-glycerol) = 1-hexadecanoyl-sn-glycero-3-phospho-(3'-hexadecanoyl-1'-sn-glycerol) + sn-glycero-3-phospho-(1'-sn-glycerol). It carries out the reaction 2 1-tetradecanoyl-sn-glycero-3-phospho-(1'-sn-glycerol) = 1-tetradecanoyl-sn-glycero-3-phospho-(3'-tetradecanoyl-1'-sn-glycerol) + sn-glycero-3-phospho-(1'-sn-glycerol). Functionally, catalyzes the synthesis of bis(monoacylglycero)phosphate (BMP) via transacylation of 2 molecules of lysophosphatidylglycerol (LPG). BMP also known as lysobisphosphatidic acid plays a key role in the formation of intraluminal vesicles and in maintaining intracellular cholesterol homeostasis. Can use only LPG as the exclusive lysophospholipid acyl donor for base exchange and displays BMP synthase activity towards various LPGs (LPG 14:0, LPG 16:0, LPG 18:0, LPG 18:1) with a higher preference for longer chain lengths. Plays a role in influencing the retrograde trafficking of lysosomal sorting receptors SORT1 and IGF2R from the endosomes to the trans-Golgi network by controlling the recruitment of retromer complex to the endosomal membrane. Regulates the localization and activation of RAB7A which is required to recruit the retromer complex to the endosomal membrane. Exhibits palmitoyl protein thioesterase (S-depalmitoylation) activity in vitro and most likely plays a role in protein S-depalmitoylation. The polypeptide is Bis(monoacylglycero)phosphate synthase CLN5 (Cln5) (Mus musculus (Mouse)).